A 201-amino-acid polypeptide reads, in one-letter code: MSRYRGPRFKKIRRLGALPGLTSKRPRAGSDPRNQSRSGKKSQYRIRLEEKQKLRFHYGLTERQLLKYVRIAGKAKGSTGQVLLQLLEMRLDNTLFRLGMALTIPQARQLVNHGHILVNGRIVDIPSYRCKPRDIITVKDEQNSRTLVQNLLDSSTPEELPNHLTLHTFQYEGLVNQIIDRKCVGLKINELLVVEYYSRQT.

Residues 1–14 show a composition bias toward basic residues; that stretch reads MSRYRGPRFKKIRR. The interval 1 to 44 is disordered; the sequence is MSRYRGPRFKKIRRLGALPGLTSKRPRAGSDPRNQSRSGKKSQY. The 64-residue stretch at 89–152 folds into the S4 RNA-binding domain; it reads MRLDNTLFRL…NSRTLVQNLL (64 aa).

Belongs to the universal ribosomal protein uS4 family. In terms of assembly, part of the 30S ribosomal subunit. Contacts protein S5. The interaction surface between S4 and S5 is involved in control of translational fidelity.

It localises to the plastid. The protein localises to the chloroplast. In terms of biological role, one of the primary rRNA binding proteins, it binds directly to 16S rRNA where it nucleates assembly of the body of the 30S subunit. Its function is as follows. With S5 and S12 plays an important role in translational accuracy. The chain is Small ribosomal subunit protein uS4c (rps4) from Draba nemorosa (Woodland whitlowgrass).